The sequence spans 252 residues: Ditrans,polycis-undecaprenyl-diphosphate synthase ((2E,6E)-farnesyl-diphosphate specific) (252 aa).

The active site involves D24. Position 24 (D24) interacts with Mg(2+). Substrate-binding positions include 25–28 (GNGR), W29, R37, H41, and 69–71 (SSE). N72 acts as the Proton acceptor in catalysis. Residues W73, R75, and R192 each contribute to the substrate site. H197 is a Mg(2+) binding site. Residue 198 to 200 (RIS) participates in substrate binding. E211 contacts Mg(2+).

Belongs to the UPP synthase family. Homodimer. Requires Mg(2+) as cofactor.

It carries out the reaction 8 isopentenyl diphosphate + (2E,6E)-farnesyl diphosphate = di-trans,octa-cis-undecaprenyl diphosphate + 8 diphosphate. Functionally, catalyzes the sequential condensation of isopentenyl diphosphate (IPP) with (2E,6E)-farnesyl diphosphate (E,E-FPP) to yield (2Z,6Z,10Z,14Z,18Z,22Z,26Z,30Z,34E,38E)-undecaprenyl diphosphate (di-trans,octa-cis-UPP). UPP is the precursor of glycosyl carrier lipid in the biosynthesis of bacterial cell wall polysaccharide components such as peptidoglycan and lipopolysaccharide. The polypeptide is Ditrans,polycis-undecaprenyl-diphosphate synthase ((2E,6E)-farnesyl-diphosphate specific) (Yersinia pestis).